Consider the following 689-residue polypeptide: Glycine--tRNA ligase beta subunit (689 aa).

It belongs to the class-II aminoacyl-tRNA synthetase family. In terms of assembly, tetramer of two alpha and two beta subunits.

It localises to the cytoplasm. It carries out the reaction tRNA(Gly) + glycine + ATP = glycyl-tRNA(Gly) + AMP + diphosphate. This is Glycine--tRNA ligase beta subunit from Photobacterium profundum (strain SS9).